A 438-amino-acid chain; its full sequence is Probable 26S proteasome regulatory subunit rpn-6.1 (438 aa).

A compositionally biased stretch (basic and acidic residues) spans 1–10; it reads MRETSSREDT. A disordered region spans residues 1 to 30; the sequence is MRETSSREDTNNIGKAPEMSGGTIMDTMTS. In terms of domain architecture, PCI spans 239-408; that stretch reads DFKTAFSYFY…GMLIVFEIAV (170 aa).

Belongs to the proteasome subunit S9 family. As to quaternary structure, component of the lid subcomplex of the 19S proteasome regulatory particle complex (also named PA700 complex). The 26S proteasome consists of a 20S proteasome core and two 19S regulatory subunits.

Component of the lid subcomplex of the 26S proteasome, a multiprotein complex involved in the ATP-dependent degradation of ubiquitinated proteins. In the complex, rpn-6.1 is required for proteasome assembly. Plays a key role in increased proteasome activity in response to proteotoxic stress: induced by daf-16, promoting enhanced assembly of the 26S proteasome and higher proteasome activity, leading to extended lifespan. This Caenorhabditis elegans protein is Probable 26S proteasome regulatory subunit rpn-6.1.